Reading from the N-terminus, the 291-residue chain is N-acetylmannosamine kinase (291 aa).

Residues 5-12 (AIDIGGTK) and 132-139 (GVGGGVVC) each bind ATP. H156, C166, C168, and C173 together coordinate Zn(2+).

Belongs to the ROK (NagC/XylR) family. NanK subfamily. Homodimer.

It carries out the reaction an N-acyl-D-mannosamine + ATP = an N-acyl-D-mannosamine 6-phosphate + ADP + H(+). Its pathway is amino-sugar metabolism; N-acetylneuraminate degradation; D-fructose 6-phosphate from N-acetylneuraminate: step 2/5. Catalyzes the phosphorylation of N-acetylmannosamine (ManNAc) to ManNAc-6-P. This chain is N-acetylmannosamine kinase, found in Salmonella dublin (strain CT_02021853).